Consider the following 269-residue polypeptide: GTP cyclohydrolase FolE2 (269 aa).

It belongs to the GTP cyclohydrolase IV family.

The catalysed reaction is GTP + H2O = 7,8-dihydroneopterin 3'-triphosphate + formate + H(+). It functions in the pathway cofactor biosynthesis; 7,8-dihydroneopterin triphosphate biosynthesis; 7,8-dihydroneopterin triphosphate from GTP: step 1/1. Converts GTP to 7,8-dihydroneopterin triphosphate. The protein is GTP cyclohydrolase FolE2 of Burkholderia ambifaria (strain MC40-6).